Reading from the N-terminus, the 663-residue chain is Probable rhamnogalacturonate lyase B (663 aa).

The first 19 residues, 1 to 19 (MRLRTSLGVASACASVASA), serve as a signal peptide directing secretion. N-linked (GlcNAc...) asparagine glycosylation is found at N27, N110, N143, N239, N285, N495, N535, N569, N597, and N638.

This sequence belongs to the polysaccharide lyase 4 family.

It localises to the secreted. It catalyses the reaction Endotype eliminative cleavage of L-alpha-rhamnopyranosyl-(1-&gt;4)-alpha-D-galactopyranosyluronic acid bonds of rhamnogalacturonan I domains in ramified hairy regions of pectin leaving L-rhamnopyranose at the reducing end and 4-deoxy-4,5-unsaturated D-galactopyranosyluronic acid at the non-reducing end.. Pectinolytic enzymes consist of four classes of enzymes: pectin lyase, polygalacturonase, pectin methylesterase and rhamnogalacturonase. Degrades the rhamnogalacturonan I (RG-I) backbone of pectin. This chain is Probable rhamnogalacturonate lyase B (rglB), found in Aspergillus flavus (strain ATCC 200026 / FGSC A1120 / IAM 13836 / NRRL 3357 / JCM 12722 / SRRC 167).